A 403-amino-acid polypeptide reads, in one-letter code: Probable tubulin--tyrosine ligase C12B10.04 (403 aa).

The TTL domain maps to K9–N386.

The protein belongs to the tubulin--tyrosine ligase family. It depends on Mg(2+) as a cofactor. K(+) is required as a cofactor.

It localises to the cytoplasm. The protein resides in the nucleus. It carries out the reaction C-terminal L-alpha-aminoacyl-L-glutamyl-L-glutamyl-[tubulin] + L-tyrosine + ATP = C-terminal L-alpha-aminoacyl-L-glutamyl-L-glutamyl-L-tyrosyl-[tubulin] + ADP + phosphate + H(+). Functionally, probable tubulin--tyrosine ligase. The polypeptide is Probable tubulin--tyrosine ligase C12B10.04 (Schizosaccharomyces pombe (strain 972 / ATCC 24843) (Fission yeast)).